A 908-amino-acid polypeptide reads, in one-letter code: 5'-3' exoribonuclease 2 homolog (908 aa).

The CCHC-type zinc-finger motif lies at 263–280 (RPCDICNGFGHEMDKCVG). Disordered regions lie at residues 409 to 457 (RQRR…VGNY) and 821 to 908 (GGNQ…YRRF). Residues 432-454 (HGSLNQSAFGASAVGPNSQQRSV) are compositionally biased toward polar residues. A Phosphoserine modification is found at serine 438. Low complexity-rich tracts occupy residues 825-868 (GQSY…HNQR) and 878-908 (QRNF…YRRF).

This sequence belongs to the 5'-3' exonuclease family. XRN2/RAT1 subfamily. As to quaternary structure, interacts with cuff and Rai1; the interaction with cuff may inhibit its role in RNA degradation.

The protein resides in the nucleus. A 5'-3' exoribonuclease. May promote the termination of transcription by RNA polymerase II and promote RNA degradation. Involved in turnover of piRNA precursors. This chain is 5'-3' exoribonuclease 2 homolog, found in Drosophila melanogaster (Fruit fly).